A 63-amino-acid chain; its full sequence is Conotoxin Pn-B01411 (63 aa).

Residues 1-22 (MRCFPVFIILLLLMASAPSFDA) form the signal peptide. The propeptide occupies 23 to 49 (RPKTEDDVPLSSFRDNLKRTLRTLLDP). An Isoleucine amide modification is found at Ile62.

This sequence belongs to the conotoxin T superfamily. Contains 2 disulfide bonds that can be either 'C1-C3, C2-C4' or 'C1-C4, C2-C3', since these disulfide connectivities have been observed for conotoxins with cysteine framework V (for examples, see AC P0DQQ7 and AC P81755). Expressed by the venom duct.

It localises to the secreted. This is Conotoxin Pn-B01411 from Conus pennaceus (Feathered cone).